A 100-amino-acid polypeptide reads, in one-letter code: Integration host factor subunit beta (100 aa).

The protein belongs to the bacterial histone-like protein family. In terms of assembly, heterodimer of an alpha and a beta chain.

This protein is one of the two subunits of integration host factor, a specific DNA-binding protein that functions in genetic recombination as well as in transcriptional and translational control. The polypeptide is Integration host factor subunit beta (Agrobacterium fabrum (strain C58 / ATCC 33970) (Agrobacterium tumefaciens (strain C58))).